Consider the following 199-residue polypeptide: Photosystem I reaction center subunit XI (199 aa).

2 consecutive transmembrane segments (helical) span residues Leu-108–Leu-128 and Phe-165–Leu-185.

It belongs to the PsaL family.

The protein localises to the cellular thylakoid membrane. The polypeptide is Photosystem I reaction center subunit XI (Prochlorococcus marinus (strain AS9601)).